The chain runs to 232 residues: Lipoprotein-releasing system ATP-binding protein LolD (232 aa).

The ABC transporter domain maps to 11–231 (VYLHDIRRQY…SLENGHVVEL (221 aa)). 47-54 (APSGSGKS) lines the ATP pocket.

The protein belongs to the ABC transporter superfamily. Lipoprotein translocase (TC 3.A.1.125) family. The complex is composed of two ATP-binding proteins (LolD) and two transmembrane proteins (LolC and LolE).

Its subcellular location is the cell inner membrane. In terms of biological role, part of the ABC transporter complex LolCDE involved in the translocation of mature outer membrane-directed lipoproteins, from the inner membrane to the periplasmic chaperone, LolA. Responsible for the formation of the LolA-lipoprotein complex in an ATP-dependent manner. This is Lipoprotein-releasing system ATP-binding protein LolD from Nitrobacter hamburgensis (strain DSM 10229 / NCIMB 13809 / X14).